The sequence spans 179 residues: Auxin-responsive protein IAA15 (179 aa).

The EAR-like (transcriptional repression) signature appears at 21-25; that stretch reads LTLAL. The 88-residue stretch at 86-173 folds into the PB1 domain; it reads RKYVKVALDG…SCKRMRLMKT (88 aa).

It belongs to the Aux/IAA family. Homodimers and heterodimers.

The protein localises to the nucleus. In terms of biological role, aux/IAA proteins are short-lived transcriptional factors that function as repressors of early auxin response genes at low auxin concentrations. Repression is thought to result from the interaction with auxin response factors (ARFs), proteins that bind to the auxin-responsive promoter element (AuxRE). Formation of heterodimers with ARF proteins may alter their ability to modulate early auxin response genes expression. In Arabidopsis thaliana (Mouse-ear cress), this protein is Auxin-responsive protein IAA15 (IAA15).